Here is a 174-residue protein sequence, read N- to C-terminus: Endoribonuclease YbeY (174 aa).

The Zn(2+) site is built by His-124, His-128, and His-134.

Belongs to the endoribonuclease YbeY family. Zn(2+) is required as a cofactor.

The protein resides in the cytoplasm. Functionally, single strand-specific metallo-endoribonuclease involved in late-stage 70S ribosome quality control and in maturation of the 3' terminus of the 16S rRNA. The sequence is that of Endoribonuclease YbeY from Synechococcus elongatus (strain ATCC 33912 / PCC 7942 / FACHB-805) (Anacystis nidulans R2).